The chain runs to 138 residues: Small ribosomal subunit protein uS11c (138 aa).

Residues 1–22 form a disordered region; that stretch reads MAKLLPRIGSRKNGRISSRKNA. Residues 9 to 22 show a composition bias toward basic residues; the sequence is GSRKNGRISSRKNA.

The protein belongs to the universal ribosomal protein uS11 family. As to quaternary structure, part of the 30S ribosomal subunit.

The protein localises to the plastid. The protein resides in the chloroplast. The polypeptide is Small ribosomal subunit protein uS11c (Populus alba (White poplar)).